A 777-amino-acid chain; its full sequence is UPF0313 protein VP1980 (777 aa).

One can recognise a Radical SAM core domain in the interval 363–642 (AYDMIKTSVN…KALLRYHDPA (280 aa)). 3 residues coordinate [4Fe-4S] cluster: Cys377, Cys381, and Cys384. The segment at 675–777 (AQTPAQRRKS…PAGQRKPKRR (103 aa)) is disordered. Over residues 680–698 (QRRKSGRHGANRFATKHTK) the composition is skewed to basic residues. The segment covering 709–719 (KRAEGGSKDGK) has biased composition (basic and acidic residues). Residues 736–747 (PASNGQRPSGNG) are compositionally biased toward polar residues. Low complexity predominate over residues 755-769 (KPQGQGRPQGQGKPA).

Belongs to the UPF0313 family. Requires [4Fe-4S] cluster as cofactor.

This Vibrio parahaemolyticus serotype O3:K6 (strain RIMD 2210633) protein is UPF0313 protein VP1980.